The sequence spans 197 residues: Dephospho-CoA kinase (197 aa).

Residues 3-197 enclose the DPCK domain; the sequence is VYGLTGGIGS…QSLLHTHQNT (195 aa). Position 11-16 (11-16) interacts with ATP; the sequence is GSGKTT.

Belongs to the CoaE family.

It localises to the cytoplasm. The catalysed reaction is 3'-dephospho-CoA + ATP = ADP + CoA + H(+). Its pathway is cofactor biosynthesis; coenzyme A biosynthesis; CoA from (R)-pantothenate: step 5/5. Functionally, catalyzes the phosphorylation of the 3'-hydroxyl group of dephosphocoenzyme A to form coenzyme A. This chain is Dephospho-CoA kinase, found in Hydrogenovibrio crunogenus (strain DSM 25203 / XCL-2) (Thiomicrospira crunogena).